We begin with the raw amino-acid sequence, 65 residues long: Large ribosomal subunit protein bL35 (65 aa).

Belongs to the bacterial ribosomal protein bL35 family.

This chain is Large ribosomal subunit protein bL35, found in Ruminiclostridium cellulolyticum (strain ATCC 35319 / DSM 5812 / JCM 6584 / H10) (Clostridium cellulolyticum).